The chain runs to 178 residues: V-type proton ATPase subunit c''2 (178 aa).

Residues 1-24 lie on the Lumenal side of the membrane; the sequence is MSGVAIHASSWGAALVRISPYTFS. The helical transmembrane segment at 25–45 threads the bilayer; that stretch reads AIGIAISIGVSVLGAAWGIYI. Over 46–64 the chain is Cytoplasmic; it reads TGSSLIGAAIEAPRITSKN. Residues 65–85 form a helical membrane-spanning segment; the sequence is LISVIFCEAVAIYGVIVAIIL. Residues 86–108 are Lumenal-facing; that stretch reads QTKLESVPSSKMYDAESLRAGYA. A helical transmembrane segment spans residues 109–129; that stretch reads IFASGIIVGFANLVCGLCVGI. Topologically, residues 130–147 are cytoplasmic; it reads IGSSCALSDAQNSTLFVK. Residues 148–168 traverse the membrane as a helical segment; sequence ILVIEIFGSALGLFGVIVGII. At 169–178 the chain is on the lumenal side; sequence MSAQATWPTK.

Belongs to the V-ATPase proteolipid subunit family. In terms of assembly, V-ATPase is a heteromultimeric enzyme composed of a peripheral catalytic V1 complex (components A to H) attached to an integral membrane V0 proton pore complex (components: a, c, c'', d and e). The proteolipid components c and c'' are present as a hexameric ring that forms the proton-conducting pore. Interacts with APD2.

Its subcellular location is the endoplasmic reticulum membrane. It localises to the golgi apparatus membrane. Functionally, proton-conducting pore forming subunit of the membrane integral V0 complex of vacuolar ATPase. V-ATPase is responsible for acidifying a variety of intracellular compartments in eukaryotic cells. This Arabidopsis thaliana (Mouse-ear cress) protein is V-type proton ATPase subunit c''2 (VHA-c''2).